The chain runs to 277 residues: Putative phosphoenolpyruvate synthase regulatory protein (277 aa).

157–164 is a binding site for ADP; that stretch reads GVSRSGKT.

The protein belongs to the pyruvate, phosphate/water dikinase regulatory protein family. PSRP subfamily.

It catalyses the reaction [pyruvate, water dikinase] + ADP = [pyruvate, water dikinase]-phosphate + AMP + H(+). The catalysed reaction is [pyruvate, water dikinase]-phosphate + phosphate + H(+) = [pyruvate, water dikinase] + diphosphate. Bifunctional serine/threonine kinase and phosphorylase involved in the regulation of the phosphoenolpyruvate synthase (PEPS) by catalyzing its phosphorylation/dephosphorylation. This is Putative phosphoenolpyruvate synthase regulatory protein from Vibrio atlanticus (strain LGP32) (Vibrio splendidus (strain Mel32)).